A 265-amino-acid polypeptide reads, in one-letter code: Silencing boundary-establishment protein FUB1-like protein (265 aa).

A disordered region spans residues 194–265 (HPENRSRNEQ…MPPGSSDMFM (72 aa)).

This sequence belongs to the proteasome inhibitor PI31 family. In terms of assembly, interacts with the 20S proteasome.

The protein localises to the cytoplasm. The protein resides in the nucleus. Functionally, may play a role in the establishment of transcriptional silencing boundaries, preventing the propagation of heterochromatic silencing. In Schizosaccharomyces pombe (strain 972 / ATCC 24843) (Fission yeast), this protein is Silencing boundary-establishment protein FUB1-like protein.